The primary structure comprises 448 residues: Thymidine phosphorylase (448 aa).

It belongs to the thymidine/pyrimidine-nucleoside phosphorylase family. In terms of assembly, homodimer.

The catalysed reaction is thymidine + phosphate = 2-deoxy-alpha-D-ribose 1-phosphate + thymine. Its pathway is pyrimidine metabolism; dTMP biosynthesis via salvage pathway; dTMP from thymine: step 1/2. Functionally, the enzymes which catalyze the reversible phosphorolysis of pyrimidine nucleosides are involved in the degradation of these compounds and in their utilization as carbon and energy sources, or in the rescue of pyrimidine bases for nucleotide synthesis. This Vibrio cholerae serotype O1 (strain ATCC 39315 / El Tor Inaba N16961) protein is Thymidine phosphorylase.